Consider the following 518-residue polypeptide: MTQHDRLLIIDFGSQVTQLIARRLRELNVYCEIHPYQNVTEAFLKGFAPKAVIFSGGPSSVFAEGAPMPPAGVFDLGVPILGICYGQQVMMHCLGGKVERGHGTAEFGRAFVTPTAERLAILDGWFEEGREQVWMSHGDHVSQIAPGFQVFGTSPNAPFAITGDPARHFYAVQFHPEVHHTPKGAKLYENFVRLAGFKGDWTMGAYREEAIARIRAQVGDQKVICGLSGGVDSSVAAVLIHEAIGDQLTCVFVDHGLLRLGEAEQVVTMFRDHYNMPLIHADESDLFLGALEGVSDPEVKRKTIGRLFIDVFQKHAADVGGATFLAQGTLYPDVIESVSFSGGPSVTIKSHHNVGGLPEKMGLKLVEPLRELFKDEVRALGRELGLPESFIGRHPFPGPGLAIRCPGEITREKLEILRRADAVYIDQIRRHGLYDEIWQAFVALLPVRTVGVMGDGRTYDYACALRAVTSVDGMTADYYPFTHDFLGETATRIINEVQGINRVTYDITSKPPGTIEWE.

Residues Arg6–Asp200 enclose the Glutamine amidotransferase type-1 domain. Cys84 (nucleophile) is an active-site residue. Active-site residues include His175 and Glu177. The GMPS ATP-PPase domain occupies Trp201–Arg393. Ser228–Ser234 lines the ATP pocket.

As to quaternary structure, homodimer.

The catalysed reaction is XMP + L-glutamine + ATP + H2O = GMP + L-glutamate + AMP + diphosphate + 2 H(+). The protein operates within purine metabolism; GMP biosynthesis; GMP from XMP (L-Gln route): step 1/1. In terms of biological role, catalyzes the synthesis of GMP from XMP. In Cereibacter sphaeroides (strain ATCC 17029 / ATH 2.4.9) (Rhodobacter sphaeroides), this protein is GMP synthase [glutamine-hydrolyzing].